The following is a 97-amino-acid chain: CRISPR-associated endoribonuclease Cas2 1 (97 aa).

D12 contributes to the Mg(2+) binding site.

The protein belongs to the CRISPR-associated endoribonuclease Cas2 protein family. As to quaternary structure, homodimer, forms a heterotetramer with a Cas1 homodimer. It depends on Mg(2+) as a cofactor.

Functionally, CRISPR (clustered regularly interspaced short palindromic repeat) is an adaptive immune system that provides protection against mobile genetic elements (viruses, transposable elements and conjugative plasmids). CRISPR clusters contain sequences complementary to antecedent mobile elements and target invading nucleic acids. CRISPR clusters are transcribed and processed into CRISPR RNA (crRNA). Functions as a ssRNA-specific endoribonuclease. Involved in the integration of spacer DNA into the CRISPR cassette. This Francisella tularensis subsp. novicida (strain U112) protein is CRISPR-associated endoribonuclease Cas2 1.